The chain runs to 477 residues: Ribulose bisphosphate carboxylase large chain (477 aa).

A propeptide spanning residues 1 to 2 is cleaved from the precursor; sequence MS. The residue at position 3 (Pro3) is an N-acetylproline. At Lys14 the chain carries N6,N6,N6-trimethyllysine. A substrate-binding site is contributed by Thr173. Lys175 serves as the catalytic Proton acceptor. Residue Lys177 coordinates substrate. Mg(2+)-binding residues include Lys201, Asp203, and Glu204. Lys201 bears the N6-carboxylysine mark. His294 serves as the catalytic Proton acceptor. Arg295, His327, and Ser379 together coordinate substrate.

Belongs to the RuBisCO large chain family. Type I subfamily. Heterohexadecamer of 8 large chains and 8 small chains; disulfide-linked. The disulfide link is formed within the large subunit homodimers. Mg(2+) is required as a cofactor. The disulfide bond which can form in the large chain dimeric partners within the hexadecamer appears to be associated with oxidative stress and protein turnover.

The protein resides in the plastid. It is found in the chloroplast. The catalysed reaction is 2 (2R)-3-phosphoglycerate + 2 H(+) = D-ribulose 1,5-bisphosphate + CO2 + H2O. The enzyme catalyses D-ribulose 1,5-bisphosphate + O2 = 2-phosphoglycolate + (2R)-3-phosphoglycerate + 2 H(+). In terms of biological role, ruBisCO catalyzes two reactions: the carboxylation of D-ribulose 1,5-bisphosphate, the primary event in carbon dioxide fixation, as well as the oxidative fragmentation of the pentose substrate in the photorespiration process. Both reactions occur simultaneously and in competition at the same active site. This chain is Ribulose bisphosphate carboxylase large chain, found in Gerbera jamesonii (Transvaal daisy).